The chain runs to 450 residues: Tol-Pal system protein TolB (450 aa).

A signal peptide spans 1–47 (MRKLWAPNWLSAKRHHANQAATRLIGRHALMAWLAAALALSAGAAQA).

Belongs to the TolB family. The Tol-Pal system is composed of five core proteins: the inner membrane proteins TolA, TolQ and TolR, the periplasmic protein TolB and the outer membrane protein Pal. They form a network linking the inner and outer membranes and the peptidoglycan layer.

Its subcellular location is the periplasm. Its function is as follows. Part of the Tol-Pal system, which plays a role in outer membrane invagination during cell division and is important for maintaining outer membrane integrity. This is Tol-Pal system protein TolB from Cupriavidus pinatubonensis (strain JMP 134 / LMG 1197) (Cupriavidus necator (strain JMP 134)).